The following is a 419-amino-acid chain: UDP-N-acetylglucosamine 1-carboxyvinyltransferase (419 aa).

22–23 is a binding site for phosphoenolpyruvate; sequence KN. A UDP-N-acetyl-alpha-D-glucosamine-binding site is contributed by Arg93. Cys117 acts as the Proton donor in catalysis. A 2-(S-cysteinyl)pyruvic acid O-phosphothioketal modification is found at Cys117. 2 residues coordinate UDP-N-acetyl-alpha-D-glucosamine: Asp307 and Ile329.

Belongs to the EPSP synthase family. MurA subfamily.

The protein resides in the cytoplasm. It carries out the reaction phosphoenolpyruvate + UDP-N-acetyl-alpha-D-glucosamine = UDP-N-acetyl-3-O-(1-carboxyvinyl)-alpha-D-glucosamine + phosphate. Its pathway is cell wall biogenesis; peptidoglycan biosynthesis. In terms of biological role, cell wall formation. Adds enolpyruvyl to UDP-N-acetylglucosamine. The sequence is that of UDP-N-acetylglucosamine 1-carboxyvinyltransferase from Shewanella sp. (strain ANA-3).